The sequence spans 273 residues: FALAHMVNDLEMVDEFVGKGANGLEIDVTFSSAGQPEYTYHGVPCDCFRNCKRREDFDTYIKYIRHLATPGDPKFRSNLIMLIFDLKLNGLSQDALRSAGKEMADKLVGNYWQDLAEARAYIVLSMPSIEQADFVTAFKDELKDFGYDKNLDRIGYDFSGNEDLGETAKVYEKLNIHEHIWQADGITNCLPRGDSRLKEAISKRDTPGYQYINKVYTWTIDKSGSIANALRLGVDGVMTNYPERVIDALNDSEFSGKLRLATYEDNPWETFKG.

The active site involves His5. Residues Glu25 and Asp27 each coordinate Mg(2+). Catalysis depends on His41, which acts as the Nucleophile. 2 disulfides stabilise this stretch: Cys45/Cys51 and Cys47/Cys189. Asp85 lines the Mg(2+) pocket. N-linked (GlcNAc...) asparagine glycosylation occurs at Asn250.

Belongs to the arthropod phospholipase D family. Class II subfamily. It depends on Mg(2+) as a cofactor. As to expression, expressed by the venom gland.

Its subcellular location is the secreted. It catalyses the reaction an N-(acyl)-sphingosylphosphocholine = an N-(acyl)-sphingosyl-1,3-cyclic phosphate + choline. The enzyme catalyses an N-(acyl)-sphingosylphosphoethanolamine = an N-(acyl)-sphingosyl-1,3-cyclic phosphate + ethanolamine. The catalysed reaction is a 1-acyl-sn-glycero-3-phosphocholine = a 1-acyl-sn-glycero-2,3-cyclic phosphate + choline. It carries out the reaction a 1-acyl-sn-glycero-3-phosphoethanolamine = a 1-acyl-sn-glycero-2,3-cyclic phosphate + ethanolamine. Functionally, dermonecrotic toxins cleave the phosphodiester linkage between the phosphate and headgroup of certain phospholipids (sphingolipid and lysolipid substrates), forming an alcohol (often choline) and a cyclic phosphate. This toxin acts on sphingomyelin (SM). It may also act on ceramide phosphoethanolamine (CPE), lysophosphatidylcholine (LPC) and lysophosphatidylethanolamine (LPE), but not on lysophosphatidylserine (LPS), and lysophosphatidylglycerol (LPG). It acts by transphosphatidylation, releasing exclusively cyclic phosphate products as second products. Induces dermonecrosis, hemolysis, increased vascular permeability, edema, inflammatory response, and platelet aggregation. The sequence is that of Dermonecrotic toxin LafSicTox-betaIE1 from Loxosceles aff. spinulosa (strain GJB-2008) (Recluse spider).